Consider the following 499-residue polypeptide: Probable cytosol aminopeptidase (499 aa).

Mn(2+) contacts are provided by Lys267 and Asp272. Lys279 is a catalytic residue. 3 residues coordinate Mn(2+): Asp290, Asp349, and Glu351. The active site involves Arg353.

Belongs to the peptidase M17 family. Requires Mn(2+) as cofactor.

The protein localises to the cytoplasm. The catalysed reaction is Release of an N-terminal amino acid, Xaa-|-Yaa-, in which Xaa is preferably Leu, but may be other amino acids including Pro although not Arg or Lys, and Yaa may be Pro. Amino acid amides and methyl esters are also readily hydrolyzed, but rates on arylamides are exceedingly low.. The enzyme catalyses Release of an N-terminal amino acid, preferentially leucine, but not glutamic or aspartic acids.. Its function is as follows. Presumably involved in the processing and regular turnover of intracellular proteins. Catalyzes the removal of unsubstituted N-terminal amino acids from various peptides. The protein is Probable cytosol aminopeptidase of Buchnera aphidicola subsp. Acyrthosiphon pisum (strain 5A).